A 430-amino-acid polypeptide reads, in one-letter code: Putative golgin subfamily A member 8D (430 aa).

Positions 2–217 (EWKLEQSMRE…LTAQLSLMAL (216 aa)) form a coiled coil. Disordered stretches follow at residues 138 to 158 (LREQ…QEER), 217 to 239 (LPGE…RPMP), 290 to 331 (PITK…GVAA), and 382 to 406 (PVQG…QDHQ). Basic and acidic residues predominate over residues 222 to 235 (HGGEHLDSEGEEAP). Positions 303 to 316 (PGGGHHQAGPGQGG) are enriched in gly residues.

This sequence belongs to the GOLGA8 family.

In Homo sapiens (Human), this protein is Putative golgin subfamily A member 8D (GOLGA8DP).